The chain runs to 904 residues: Myelin regulatory factor-like protein (904 aa).

The segment at 46–132 (LQRQLPDTPP…ATCRHQTGPS (87 aa)) is disordered. Over residues 100–117 (PSQSMAGQTHSSFQNGYP) the composition is skewed to polar residues. A DNA-binding region (NDT80) is located at residues 108 to 400 (THSSFQNGYP…SNPGQFENDS (293 aa)). Residues 446 to 554 (SDSRVKENIQ…KLTNNLEERI (109 aa)) form the Peptidase S74 domain. A coiled-coil region spans residues 538–575 (GAVKQLCKLTNNLEERIEELEIWNKKLARLKRLSSSWK). A helical transmembrane segment spans residues 624–644 (LVVVLIAVMAFCALTIVALYI). Positions 656-688 (NLPLSNMTSSPEPALSSTAPTSAPHTTPETTQT) are disordered. Residues 663–688 (TSSPEPALSSTAPTSAPHTTPETTQT) are compositionally biased toward low complexity.

Belongs to the MRF family.

The protein resides in the membrane. This Mus musculus (Mouse) protein is Myelin regulatory factor-like protein (Myrfl).